Consider the following 699-residue polypeptide: Elongation factor G (699 aa).

The tr-type G domain maps to 8–288 (EDYRNFGIMA…AVVDYLPSPV (281 aa)). Residues 17-24 (AHIDAGKT), 86-90 (DTPGH), and 140-143 (NKMD) contribute to the GTP site.

This sequence belongs to the TRAFAC class translation factor GTPase superfamily. Classic translation factor GTPase family. EF-G/EF-2 subfamily.

It localises to the cytoplasm. In terms of biological role, catalyzes the GTP-dependent ribosomal translocation step during translation elongation. During this step, the ribosome changes from the pre-translocational (PRE) to the post-translocational (POST) state as the newly formed A-site-bound peptidyl-tRNA and P-site-bound deacylated tRNA move to the P and E sites, respectively. Catalyzes the coordinated movement of the two tRNA molecules, the mRNA and conformational changes in the ribosome. This Sinorhizobium medicae (strain WSM419) (Ensifer medicae) protein is Elongation factor G.